The chain runs to 287 residues: ADP-dependent (S)-NAD(P)H-hydrate dehydratase (287 aa).

The YjeF C-terminal domain occupies 7-283 (GEDDVRKFVP…ELLPSVMKPF (277 aa)). (6S)-NADPHX contacts are provided by Ala-42 and His-159. AMP contacts are provided by residues 196–200 (KGPTD) and Gly-224. Asp-225 is a (6S)-NADPHX binding site.

Belongs to the NnrD/CARKD family. As to quaternary structure, homotetramer. The cofactor is Mg(2+).

The enzyme catalyses (6S)-NADHX + ADP = AMP + phosphate + NADH + H(+). It carries out the reaction (6S)-NADPHX + ADP = AMP + phosphate + NADPH + H(+). Its function is as follows. Catalyzes the dehydration of the S-form of NAD(P)HX at the expense of ADP, which is converted to AMP. Together with NAD(P)HX epimerase, which catalyzes the epimerization of the S- and R-forms, the enzyme allows the repair of both epimers of NAD(P)HX, a damaged form of NAD(P)H that is a result of enzymatic or heat-dependent hydration. The chain is ADP-dependent (S)-NAD(P)H-hydrate dehydratase from Cenarchaeum symbiosum (strain A).